A 122-amino-acid polypeptide reads, in one-letter code: Large ribosomal subunit protein uL14 (122 aa).

It belongs to the universal ribosomal protein uL14 family. In terms of assembly, part of the 50S ribosomal subunit. Forms a cluster with proteins L3 and L19. In the 70S ribosome, L14 and L19 interact and together make contacts with the 16S rRNA in bridges B5 and B8.

Functionally, binds to 23S rRNA. Forms part of two intersubunit bridges in the 70S ribosome. The chain is Large ribosomal subunit protein uL14 from Ligilactobacillus salivarius (strain UCC118) (Lactobacillus salivarius).